The chain runs to 82 residues: Omega-conotoxin-like Am6.2 (82 aa).

Residues 1–22 form the signal peptide; that stretch reads MKLTCMMIVAVLFLTAWTFVTA. Residues 23–52 constitute a propeptide that is removed on maturation; it reads VPHSSNVLENLYLKARHEMENQEASKLNMR. Disulfide bonds link cysteine 56/cysteine 73, cysteine 63/cysteine 77, and cysteine 72/cysteine 81. Tryptophan 76 carries the 6'-bromotryptophan; partial; in Am6.2b (major form) modification.

This sequence belongs to the conotoxin O1 family. In terms of processing, mostly non-hydroxylated. Two forms of this peptides have been described. Am6.2a (Am3136) is not unmodified, while Am6.2b (Am3214) is Trp-76 brominated. Both forms are found in venom with a much more abundant brominated form. As to expression, expressed by the venom duct.

It localises to the secreted. Functionally, omega-conotoxins act at presynaptic membranes, they bind and block voltage-gated calcium channels (Cav). The chain is Omega-conotoxin-like Am6.2 from Conus amadis (Amadis cone).